A 487-amino-acid chain; its full sequence is Glutamate--tRNA ligase (487 aa).

A 'HIGH' region motif is present at residues proline 12–asparagine 22. Residues lysine 249–arginine 253 carry the 'KMSKS' region motif. ATP is bound at residue lysine 252.

Belongs to the class-I aminoacyl-tRNA synthetase family. Glutamate--tRNA ligase type 1 subfamily. Monomer.

Its subcellular location is the cytoplasm. The catalysed reaction is tRNA(Glu) + L-glutamate + ATP = L-glutamyl-tRNA(Glu) + AMP + diphosphate. In terms of biological role, catalyzes the attachment of glutamate to tRNA(Glu) in a two-step reaction: glutamate is first activated by ATP to form Glu-AMP and then transferred to the acceptor end of tRNA(Glu). The chain is Glutamate--tRNA ligase from Clostridium novyi (strain NT).